Here is a 320-residue protein sequence, read N- to C-terminus: uncharacterized protein (320 aa).

Helical transmembrane passes span 24 to 44, 65 to 85, 105 to 125, 132 to 152, 179 to 199, 226 to 246, and 253 to 275; these read FEFSVHGTCVVFNLFLCIFFI, FVLSLPLFFLQFYLVVFLWSL, TTSCAQVLPLAVAIYRYFIVV, SWFVVVVHSIISFIFFVIAIL, ISLTLGLNLFAVFINVAIYTF, MIPILVSIPLLVGSFDFYFGY, and TSRWYATTFLSPLLTPISSMLSL.

It localises to the membrane. This is an uncharacterized protein from Caenorhabditis elegans.